Reading from the N-terminus, the 421-residue chain is UDP-N-acetylglucosamine 1-carboxyvinyltransferase (421 aa).

22–23 (KN) is a binding site for phosphoenolpyruvate. R93 provides a ligand contact to UDP-N-acetyl-alpha-D-glucosamine. C117 acts as the Proton donor in catalysis. C117 carries the post-translational modification 2-(S-cysteinyl)pyruvic acid O-phosphothioketal. Residues 122–126 (RPVDL), D308, and I330 each bind UDP-N-acetyl-alpha-D-glucosamine.

The protein belongs to the EPSP synthase family. MurA subfamily.

The protein resides in the cytoplasm. The catalysed reaction is phosphoenolpyruvate + UDP-N-acetyl-alpha-D-glucosamine = UDP-N-acetyl-3-O-(1-carboxyvinyl)-alpha-D-glucosamine + phosphate. Its pathway is cell wall biogenesis; peptidoglycan biosynthesis. Its function is as follows. Cell wall formation. Adds enolpyruvyl to UDP-N-acetylglucosamine. In Pseudomonas fluorescens (strain SBW25), this protein is UDP-N-acetylglucosamine 1-carboxyvinyltransferase.